We begin with the raw amino-acid sequence, 333 residues long: Ribokinase (333 aa).

Substrate contacts are provided by residues 10 to 12 (NYD), 38 to 42 (GKGLN), and Glu-149. ATP contacts are provided by residues Asn-193 and 248-253 (TLGSRG). Positions 277 and 279 each coordinate K(+). 282-283 (GD) is an ATP binding site. Asp-283 is a binding site for substrate. The active-site Proton acceptor is Asp-283. 4 residues coordinate K(+): Thr-313, Arg-316, Gly-318, and Ser-322.

The protein belongs to the carbohydrate kinase PfkB family. Ribokinase subfamily. Homodimer. Requires Mg(2+) as cofactor.

It localises to the cytoplasm. It is found in the nucleus. The catalysed reaction is D-ribose + ATP = D-ribose 5-phosphate + ADP + H(+). Its pathway is carbohydrate metabolism; D-ribose degradation; D-ribose 5-phosphate from beta-D-ribopyranose: step 2/2. With respect to regulation, activated by a monovalent cation that binds near, but not in, the active site. The most likely occupant of the site in vivo is potassium. Ion binding induces a conformational change that may alter substrate affinity. Catalyzes the phosphorylation of ribose at O-5 in a reaction requiring ATP and magnesium. The resulting D-ribose-5-phosphate can then be used either for sythesis of nucleotides, histidine, and tryptophan, or as a component of the pentose phosphate pathway. In Saccharomyces cerevisiae (strain ATCC 204508 / S288c) (Baker's yeast), this protein is Ribokinase.